A 360-amino-acid polypeptide reads, in one-letter code: Putative F-box protein At3g16210 (360 aa).

An F-box domain is found at 1-48 (MSKFLPEELAIEILVRLSMKDLARFRCVCKTWRDLINDPGFTETYRDM).

The polypeptide is Putative F-box protein At3g16210 (Arabidopsis thaliana (Mouse-ear cress)).